The following is a 177-amino-acid chain: Large ribosomal subunit protein uL6 (177 aa).

Belongs to the universal ribosomal protein uL6 family. As to quaternary structure, part of the 50S ribosomal subunit.

In terms of biological role, this protein binds to the 23S rRNA, and is important in its secondary structure. It is located near the subunit interface in the base of the L7/L12 stalk, and near the tRNA binding site of the peptidyltransferase center. The chain is Large ribosomal subunit protein uL6 from Glaesserella parasuis serovar 5 (strain SH0165) (Haemophilus parasuis).